Consider the following 154-residue polypeptide: NADPH-dependent 7-cyano-7-deazaguanine reductase (154 aa).

Cys-52 (thioimide intermediate) is an active-site residue. Asp-59 serves as the catalytic Proton donor. Residues 74 to 76 and 93 to 94 each bind substrate; these read VES and HE.

It belongs to the GTP cyclohydrolase I family. QueF type 1 subfamily.

The protein localises to the cytoplasm. It catalyses the reaction 7-aminomethyl-7-carbaguanine + 2 NADP(+) = 7-cyano-7-deazaguanine + 2 NADPH + 3 H(+). Its pathway is tRNA modification; tRNA-queuosine biosynthesis. Catalyzes the NADPH-dependent reduction of 7-cyano-7-deazaguanine (preQ0) to 7-aminomethyl-7-deazaguanine (preQ1). The chain is NADPH-dependent 7-cyano-7-deazaguanine reductase from Paracoccus denitrificans (strain Pd 1222).